Consider the following 139-residue polypeptide: Crossover junction endodeoxyribonuclease Hje (139 aa).

Positions 10, 39, and 52 each coordinate Mg(2+).

Belongs to the Holliday junction resolvase Hjc family. Hje subfamily. In terms of assembly, homodimer. The cofactor is Mg(2+).

It carries out the reaction Endonucleolytic cleavage at a junction such as a reciprocal single-stranded crossover between two homologous DNA duplexes (Holliday junction).. Its function is as follows. A structure-specific endonuclease that resolves Holliday junction (HJ) intermediates during genetic recombination. Acts only on 4-way DNA junctions in a sequence non-specific manner; introduces paired nicks in opposing strands 2 bases 3' of the point of strand exchange only on continuous strands of 4-way junction DNA. Cleaves both mobile and immobile junctions. Redundant function with Holliday junction resolvase Hjc. The sequence is that of Crossover junction endodeoxyribonuclease Hje from Sulfolobus acidocaldarius (strain ATCC 33909 / DSM 639 / JCM 8929 / NBRC 15157 / NCIMB 11770).